Reading from the N-terminus, the 328-residue chain is Nucleotide-binding protein BLD_0430 (328 aa).

Positions Met-1 to Pro-35 are disordered. Low complexity predominate over residues Ala-13 to Pro-29. Gly-46 to Ser-53 is an ATP binding site. Residue Asp-101–Ser-104 participates in GTP binding.

The protein belongs to the RapZ-like family.

Displays ATPase and GTPase activities. The protein is Nucleotide-binding protein BLD_0430 of Bifidobacterium longum (strain DJO10A).